The sequence spans 521 residues: GMP synthase [glutamine-hydrolyzing] (521 aa).

One can recognise a Glutamine amidotransferase type-1 domain in the interval 8-203 (KILILDFGAQ…VVDVCGCQTL (196 aa)). Residue Cys85 is the Nucleophile of the active site. Catalysis depends on residues His177 and Glu179. The 193-residue stretch at 204–396 (WTAANIIDDQ…LGLPRTMVYR (193 aa)) folds into the GMPS ATP-PPase domain. 231 to 237 (SGGVDSS) contacts ATP.

Homodimer.

The enzyme catalyses XMP + L-glutamine + ATP + H2O = GMP + L-glutamate + AMP + diphosphate + 2 H(+). It functions in the pathway purine metabolism; GMP biosynthesis; GMP from XMP (L-Gln route): step 1/1. Functionally, catalyzes the synthesis of GMP from XMP. In Stenotrophomonas maltophilia (strain K279a), this protein is GMP synthase [glutamine-hydrolyzing].